The primary structure comprises 79 residues: Putative membrane protein insertion efficiency factor (79 aa).

It belongs to the UPF0161 family.

It is found in the cell inner membrane. In terms of biological role, could be involved in insertion of integral membrane proteins into the membrane. This Cytophaga hutchinsonii (strain ATCC 33406 / DSM 1761 / CIP 103989 / NBRC 15051 / NCIMB 9469 / D465) protein is Putative membrane protein insertion efficiency factor.